We begin with the raw amino-acid sequence, 114 residues long: uncharacterized protein (114 aa).

Residues 1–24 (MFGACYKQPLKPSGSEPPAEECRM) form a disordered region.

In terms of tissue distribution, expressed in kidney and liver.

This is an uncharacterized protein from Homo sapiens (Human).